The following is a 186-amino-acid chain: MDTFSTKNLALQAQKKLLSKMASKTVANVFIDDTSSEILDELYRATKEYTHNRKEAQKIIKNLIKIVMKLGVLYRNGQFSPEELLVMERFRKKVHTLAMTAVSFHQIDFTFDRRVVSSVLTECRDLLHQAVSSHLTAKSHSRINHVFNHFADYEFLSALYGPAEPYRTHLKRICEGVNKMLEEDNI.

The protein belongs to the TNFAIP8 family.

It localises to the cytoplasm. The sequence is that of Tumor necrosis factor alpha-induced protein 8-like protein 1 (TNFAIP8L1) from Gallus gallus (Chicken).